We begin with the raw amino-acid sequence, 96 residues long: Uteroglobin (96 aa).

The N-terminal stretch at 1-21 is a signal peptide; the sequence is MKIAITITVVMLSICCSSASS.

The protein belongs to the secretoglobin family. In terms of assembly, antiparallel homodimer; disulfide-linked. Interaction with LMBR1L is controversial. Club cells (nonciliated cells of the surface epithelium of the pulmonary airways).

The protein localises to the secreted. Its function is as follows. Binds phosphatidylcholine, phosphatidylinositol, polychlorinated biphenyls (PCB) and weakly progesterone, potent inhibitor of phospholipase A2. In Mus musculus (Mouse), this protein is Uteroglobin (Scgb1a1).